Here is a 329-residue protein sequence, read N- to C-terminus: Acetyl-coenzyme A carboxylase carboxyl transferase subunit alpha (329 aa).

Positions 40-294 (QLETLAARRR…KTSILRHLTE (255 aa)) constitute a CoA carboxyltransferase C-terminal domain.

The protein belongs to the AccA family. As to quaternary structure, acetyl-CoA carboxylase is a heterohexamer composed of biotin carboxyl carrier protein (AccB), biotin carboxylase (AccC) and two subunits each of ACCase subunit alpha (AccA) and ACCase subunit beta (AccD).

Its subcellular location is the cytoplasm. It catalyses the reaction N(6)-carboxybiotinyl-L-lysyl-[protein] + acetyl-CoA = N(6)-biotinyl-L-lysyl-[protein] + malonyl-CoA. Its pathway is lipid metabolism; malonyl-CoA biosynthesis; malonyl-CoA from acetyl-CoA: step 1/1. Functionally, component of the acetyl coenzyme A carboxylase (ACC) complex. First, biotin carboxylase catalyzes the carboxylation of biotin on its carrier protein (BCCP) and then the CO(2) group is transferred by the carboxyltransferase to acetyl-CoA to form malonyl-CoA. The chain is Acetyl-coenzyme A carboxylase carboxyl transferase subunit alpha from Prochlorococcus marinus (strain SARG / CCMP1375 / SS120).